The primary structure comprises 398 residues: LL-diaminopimelate aminotransferase (398 aa).

Substrate contacts are provided by Tyr14 and Gly41. Pyridoxal 5'-phosphate is bound by residues Tyr71, 104 to 105 (AK), Tyr128, Asn174, Tyr205, and 233 to 235 (SFS). Lys105, Tyr128, and Asn174 together coordinate substrate. Lys236 is subject to N6-(pyridoxal phosphate)lysine. Residues Arg244 and Asn275 each contribute to the pyridoxal 5'-phosphate site. 2 residues coordinate substrate: Asn275 and Arg368.

This sequence belongs to the class-I pyridoxal-phosphate-dependent aminotransferase family. LL-diaminopimelate aminotransferase subfamily. In terms of assembly, homodimer. Pyridoxal 5'-phosphate serves as cofactor.

The catalysed reaction is (2S,6S)-2,6-diaminopimelate + 2-oxoglutarate = (S)-2,3,4,5-tetrahydrodipicolinate + L-glutamate + H2O + H(+). The protein operates within amino-acid biosynthesis; L-lysine biosynthesis via DAP pathway; LL-2,6-diaminopimelate from (S)-tetrahydrodipicolinate (aminotransferase route): step 1/1. In terms of biological role, involved in the synthesis of meso-diaminopimelate (m-DAP or DL-DAP), required for both lysine and peptidoglycan biosynthesis. Catalyzes the direct conversion of tetrahydrodipicolinate to LL-diaminopimelate. The polypeptide is LL-diaminopimelate aminotransferase (Chlamydia felis (strain Fe/C-56) (Chlamydophila felis)).